Here is a 477-residue protein sequence, read N- to C-terminus: Exodeoxyribonuclease 7 large subunit (477 aa).

The interval 456–477 (GGTVAPRKAPPKKPGGGQGSLL) is disordered.

The protein belongs to the XseA family. As to quaternary structure, heterooligomer composed of large and small subunits.

It is found in the cytoplasm. It carries out the reaction Exonucleolytic cleavage in either 5'- to 3'- or 3'- to 5'-direction to yield nucleoside 5'-phosphates.. In terms of biological role, bidirectionally degrades single-stranded DNA into large acid-insoluble oligonucleotides, which are then degraded further into small acid-soluble oligonucleotides. The protein is Exodeoxyribonuclease 7 large subunit of Parvibaculum lavamentivorans (strain DS-1 / DSM 13023 / NCIMB 13966).